Reading from the N-terminus, the 152-residue chain is Putative aryl-alcohol dehydrogenase YFL057C (152 aa).

This sequence belongs to the aldo/keto reductase family. Aldo/keto reductase 2 subfamily.

Its function is as follows. Putative aryl-alcohol dehydrogenase. The polypeptide is Putative aryl-alcohol dehydrogenase YFL057C (Saccharomyces cerevisiae (strain ATCC 204508 / S288c) (Baker's yeast)).